The primary structure comprises 194 residues: Transmembrane protein 212 (194 aa).

Helical transmembrane passes span 11 to 31 (ILVT…FPVF), 44 to 64 (IACP…LLLA), 76 to 96 (ATFT…AIAL), 99 to 119 (ALLG…NYLG), and 148 to 168 (LQAL…TVFI).

Its subcellular location is the membrane. The polypeptide is Transmembrane protein 212 (TMEM212) (Homo sapiens (Human)).